Consider the following 96-residue polypeptide: Small ribosomal subunit protein bS6 (96 aa).

Belongs to the bacterial ribosomal protein bS6 family.

Functionally, binds together with bS18 to 16S ribosomal RNA. The protein is Small ribosomal subunit protein bS6 (rpsF) of Mycobacterium bovis (strain ATCC BAA-935 / AF2122/97).